The following is a 390-amino-acid chain: Phosphopentomutase (390 aa).

Residues D11, D283, H288, D324, H325, and H336 each contribute to the Mn(2+) site.

This sequence belongs to the phosphopentomutase family. Mn(2+) is required as a cofactor.

It localises to the cytoplasm. The catalysed reaction is 2-deoxy-alpha-D-ribose 1-phosphate = 2-deoxy-D-ribose 5-phosphate. The enzyme catalyses alpha-D-ribose 1-phosphate = D-ribose 5-phosphate. Its pathway is carbohydrate degradation; 2-deoxy-D-ribose 1-phosphate degradation; D-glyceraldehyde 3-phosphate and acetaldehyde from 2-deoxy-alpha-D-ribose 1-phosphate: step 1/2. In terms of biological role, isomerase that catalyzes the conversion of deoxy-ribose 1-phosphate (dRib-1-P) and ribose 1-phosphate (Rib-1-P) to deoxy-ribose 5-phosphate (dRib-5-P) and ribose 5-phosphate (Rib-5-P), respectively. The polypeptide is Phosphopentomutase (Clostridium novyi (strain NT)).